We begin with the raw amino-acid sequence, 775 residues long: N6-adenosine-methyltransferase non-catalytic subunit MTB (775 aa).

Positions 1–10 are enriched in basic and acidic residues; it reads MKKKQEESSL. 2 disordered regions span residues 1–424 and 520–569; these read MKKK…GAIP and DRGG…EQND. Positions 40–49 are enriched in low complexity; the sequence is FESSSRSGGS. Basic and acidic residues-rich tracts occupy residues 50–79, 100–117, 125–222, 229–278, and 333–344; these read KSKE…ERTH, DGDH…DSGG, EHGE…LKDN, SSGD…RGEA, and EWAHNQEGRQRS. Residues 375 to 400 show a composition bias toward polar residues; it reads QRGSTPGRTNFVQTPNRGYQTPQGTR.

The protein belongs to the MT-A70-like family. Forms homodimers. Interacts with HAKAI, MTA and VIR. Associates with MTA, FIP37, VIR and HAKAI to form the m6A writer complex which is essential for adenosine methylation at specific mRNA sequences.

The protein resides in the nucleus speckle. The protein localises to the nucleus. Its subcellular location is the nucleoplasm. Its function is as follows. Probable non-catalytic subunit of the N6-methyltransferase complex, a multiprotein complex that mediates N6-methyladenosine (m6A) methylation at the 5'-[AG]GAC-3' consensus sites of some mRNAs. Associates with MTA, FIP37, VIR and HAKAI to form the m6A writer complex which is essential for adenosine methylation at specific mRNA sequences. N6-methyladenosine (m6A) plays a role in mRNA stability, processing, translation efficiency and editing. The chain is N6-adenosine-methyltransferase non-catalytic subunit MTB from Arabidopsis thaliana (Mouse-ear cress).